The following is a 245-amino-acid chain: AP-1-like transcription factor YAP7 (245 aa).

Residues 1–144 (MRQRRSVVAV…NRDAQRAYRE (144 aa)) form a disordered region. A compositionally biased stretch (polar residues) spans 74–94 (SANNDGSSKIKKVQTSNQKDQ). Basic and acidic residues-rich tracts occupy residues 95–114 (MTTKDHENEGAKGHEGKSDD) and 135–144 (NRDAQRAYRE). Positions 125–188 (VDSVEKRRRQ…SDTKENLQKS (64 aa)) constitute a bZIP domain. Positions 130–149 (KRRRQNRDAQRAYRERRTTR) are basic motif. The interval 153–181 (LEEKVEMLHNLVDDWQRKYKLLESEFSDT) is leucine-zipper.

The protein belongs to the bZIP family. YAP subfamily. Homodimer.

Its subcellular location is the nucleus. In terms of biological role, probable transcription activator linked to cell cycle that induces transcription activation of genes in the environmental stress response and metabolism control pathways, like the closely related YAP5. The protein is AP-1-like transcription factor YAP7 (YAP7) of Saccharomyces cerevisiae (strain ATCC 204508 / S288c) (Baker's yeast).